Reading from the N-terminus, the 466-residue chain is GTPase Der (466 aa).

2 EngA-type G domains span residues 3 to 166 (PVIA…PEIP) and 177 to 350 (IKIA…QSAT). Residues 9–16 (GRPNVGKS), 56–60 (DTGGI), 118–121 (NKID), 183–190 (GRPNVGKS), 230–234 (DTAGV), and 295–298 (NKWD) each bind GTP. In terms of domain architecture, KH-like spans 351-435 (DRFSTNYLTR…PIRIEFRTTD (85 aa)). The interval 442 to 466 (KKSMTRQQFIQKRRKEERDRNNPRR) is disordered. Residues 455–466 (RKEERDRNNPRR) show a composition bias toward basic and acidic residues.

Belongs to the TRAFAC class TrmE-Era-EngA-EngB-Septin-like GTPase superfamily. EngA (Der) GTPase family. As to quaternary structure, associates with the 50S ribosomal subunit.

Its function is as follows. GTPase that plays an essential role in the late steps of ribosome biogenesis. In Cellvibrio japonicus (strain Ueda107) (Pseudomonas fluorescens subsp. cellulosa), this protein is GTPase Der.